The primary structure comprises 535 residues: Glutamyl-tRNA reductase 3, chloroplastic (535 aa).

The active-site Nucleophile is the Cys-131. Substrate contacts are provided by residues 131-133 (CNR), Ser-190, 195-197 (EGQ), and Gln-201. Residue 272-277 (GAGKMG) participates in NADP(+) binding.

This sequence belongs to the glutamyl-tRNA reductase family. As to expression, primarily expressed in roots.

It is found in the plastid. It localises to the chloroplast. It catalyses the reaction (S)-4-amino-5-oxopentanoate + tRNA(Glu) + NADP(+) = L-glutamyl-tRNA(Glu) + NADPH + H(+). Its pathway is porphyrin-containing compound metabolism; protoporphyrin-IX biosynthesis; 5-aminolevulinate from L-glutamyl-tRNA(Glu): step 1/2. Catalyzes the NADPH-dependent reduction of glutamyl-tRNA(Glu) to glutamate 1-semialdehyde (GSA). The polypeptide is Glutamyl-tRNA reductase 3, chloroplastic (HEMA3) (Hordeum vulgare (Barley)).